The sequence spans 348 residues: Elongation factor Ts (348 aa).

Residues 82–85 (TDFV) form an involved in Mg(2+) ion dislocation from EF-Tu region.

This sequence belongs to the EF-Ts family.

Its subcellular location is the cytoplasm. Its function is as follows. Associates with the EF-Tu.GDP complex and induces the exchange of GDP to GTP. It remains bound to the aminoacyl-tRNA.EF-Tu.GTP complex up to the GTP hydrolysis stage on the ribosome. In Aliarcobacter butzleri (strain RM4018) (Arcobacter butzleri), this protein is Elongation factor Ts.